Reading from the N-terminus, the 314-residue chain is tRNA dimethylallyltransferase (314 aa).

14-21 (GPTASGKT) lines the ATP pocket. 16–21 (TASGKT) serves as a coordination point for substrate. Interaction with substrate tRNA stretches follow at residues 39 to 42 (DSAQ), 163 to 167 (QRLQR), and 245 to 250 (RCVGYR).

This sequence belongs to the IPP transferase family. As to quaternary structure, monomer. It depends on Mg(2+) as a cofactor.

The enzyme catalyses adenosine(37) in tRNA + dimethylallyl diphosphate = N(6)-dimethylallyladenosine(37) in tRNA + diphosphate. In terms of biological role, catalyzes the transfer of a dimethylallyl group onto the adenine at position 37 in tRNAs that read codons beginning with uridine, leading to the formation of N6-(dimethylallyl)adenosine (i(6)A). The sequence is that of tRNA dimethylallyltransferase from Dechloromonas aromatica (strain RCB).